The chain runs to 521 residues: Na(+)/H(+) antiporter ApNhaP (521 aa).

At 1 to 18 (MTIEAAMGEEAIKENLEQ) the chain is on the periplasmic side. Residues 19 to 39 (FLIVLSVSLGVATLSQISSFF) form a helical membrane-spanning segment. The Cytoplasmic segment spans residues 40 to 41 (RQ). Residues 42–62 (IPYTLLLVIVGLGLAFVDIRL) form a helical membrane-spanning segment. Over 63–94 (VNLSPELILEIFLPPLLFEAAWNIRWRNLKKN) the chain is Periplasmic. A helical transmembrane segment spans residues 95-115 (LFPVVLLAIIGVVISVVGIGF). Residues 116-126 (SLNYFSGLSLP) are Cytoplasmic-facing. A helical transmembrane segment spans residues 127-147 (IALLVGAILAATDPVSVIALF). Over 148 to 164 (RELGVGERLTVLMEGES) the chain is Periplasmic. Residues 165–185 (LFNDGVAVVAFSLLVGIPLGT) traverse the membrane as a helical segment. The Cytoplasmic portion of the chain corresponds to 186–194 (QEFSVTNTL). The chain crosses the membrane as a helical span at residues 195–215 (IQFVTLQGIGIGCGGVIGFGI). Topologically, residues 216 to 245 (SYLTQRFDLPLVEQSLTLVSAYGTYLITEE) are periplasmic. Residues 246–266 (LGGSGVIGVVTVGLILGNFGS) form a helical membrane-spanning segment. The Cytoplasmic portion of the chain corresponds to 267 to 276 (RIGMNPRTRL). Residues 277-297 (LVSEFWEFIAFFVNSIVFLLI) form a helical membrane-spanning segment. The Periplasmic segment spans residues 298–311 (GDQINIRGLADNGQ). The helical transmembrane segment at 312 to 332 (LILITIIALVIIRAISIYGLG) threads the bilayer. At 333-349 (TISNLITKQDISWQEET) the chain is on the cytoplasmic side. The helical transmembrane segment at 350 to 370 (VLWWGGLRGSVSIALALSVPV) threads the bilayer. Over 371-380 (MLDGRQDIIE) the chain is Periplasmic. Residues 381-401 (AVFGVVLFTLLVQGLTMQTVI) traverse the membrane as a helical segment. The Cytoplasmic portion of the chain corresponds to 402-521 (EKLGLIGDRA…LLQEVLAKPE (120 aa)).

It belongs to the monovalent cation:proton antiporter 1 (CPA1) transporter (TC 2.A.36) family.

The protein localises to the cell inner membrane. In terms of biological role, na(+)/H(+) antiporter that extrudes sodium in exchange for external protons. Also shows high Ca(2+)/H(+) antiporter activity at alkaline pH. Does not catalyze exchange between Li(+) and H(+). This Aphanothece halophytica protein is Na(+)/H(+) antiporter ApNhaP (apnhaP).